The sequence spans 98 residues: Cystatin-B (98 aa).

The 80-residue stretch at 4 to 83 (GGTSQPVDAD…PCNGETLELS (80 aa)) folds into the Cystatin domain. Positions 46 to 50 (QCVPG) match the Secondary area of contact motif.

Belongs to the cystatin family. As to expression, ubiquitously expressed in normal and lipopolysaccharide (LPS)-stimulated tissues including brain, eye, gullet, heart, liver, muscle, stomach, kidney, spleen, pyloric ceca, intestine and gill.

The protein resides in the cytoplasm. With respect to regulation, greatly decreased inhibitory activity against papain protease by metal ions including ZnSO(4), CuSO(4), HgCl(2) and CoCl(2). Decreased inhibitory activity against papain protease by detergents including Tween 20, SDS and Brij 35. Thiol protease inhibitor. Has high papain, bovine cathepsin B and fish cathepsins F and X inhibitory activity and inhibits fish cathepsins L, S and K to a lesser extent in vitro. May be involved in innate immunity. This chain is Cystatin-B, found in Paralichthys olivaceus (Bastard halibut).